Reading from the N-terminus, the 672-residue chain is DNA ligase (672 aa).

NAD(+)-binding positions include 32 to 36 (DSEYD), 81 to 82 (SL), and E114. Catalysis depends on K116, which acts as the N6-AMP-lysine intermediate. Residues R137, E174, K291, and K315 each contribute to the NAD(+) site. The Zn(2+) site is built by C409, C412, C427, and C433. The BRCT domain maps to 592 to 672 (VNENPFKEKT…EFLEIVNSFS (81 aa)).

Belongs to the NAD-dependent DNA ligase family. LigA subfamily. It depends on Mg(2+) as a cofactor. Mn(2+) serves as cofactor.

The catalysed reaction is NAD(+) + (deoxyribonucleotide)n-3'-hydroxyl + 5'-phospho-(deoxyribonucleotide)m = (deoxyribonucleotide)n+m + AMP + beta-nicotinamide D-nucleotide.. Its function is as follows. DNA ligase that catalyzes the formation of phosphodiester linkages between 5'-phosphoryl and 3'-hydroxyl groups in double-stranded DNA using NAD as a coenzyme and as the energy source for the reaction. It is essential for DNA replication and repair of damaged DNA. This Actinobacillus succinogenes (strain ATCC 55618 / DSM 22257 / CCUG 43843 / 130Z) protein is DNA ligase.